The following is a 471-amino-acid chain: Putative multidrug resistance protein MdtD (471 aa).

Topologically, residues M1 to Q11 are periplasmic. Residues L12–A32 form a helical membrane-spanning segment. The Cytoplasmic portion of the chain corresponds to L33–H48. The helical transmembrane segment at M49–A69 threads the bilayer. Residues D70 to N76 lie on the Periplasmic side of the membrane. The helical transmembrane segment at I77–T97 threads the bilayer. The Cytoplasmic segment spans residues L98 to L101. A helical transmembrane segment spans residues L102–M124. Topologically, residues K125–T137 are periplasmic. Residues F138 to V158 form a helical membrane-spanning segment. Over E159–H164 the chain is Cytoplasmic. The chain crosses the membrane as a helical span at residues W165 to M185. Residues P186 to D196 are Periplasmic-facing. A helical transmembrane segment spans residues L197 to S217. The Cytoplasmic segment spans residues K218–P224. Residues L225–A245 form a helical membrane-spanning segment. Residues Q246–T262 lie on the Periplasmic side of the membrane. Residues F263–M283 traverse the membrane as a helical segment. At T284–P285 the chain is on the cytoplasmic side. A helical transmembrane segment spans residues V286–M306. Topologically, residues V307–T341 are periplasmic. A helical transmembrane segment spans residues L342–L362. Residues Q363–S395 lie on the Cytoplasmic side of the membrane. The chain crosses the membrane as a helical span at residues M396 to F416. Over G417–T430 the chain is Periplasmic. The chain crosses the membrane as a helical span at residues V431–A451. Residues R452–Q471 lie on the Cytoplasmic side of the membrane.

Belongs to the major facilitator superfamily. TCR/Tet family.

The protein resides in the cell inner membrane. The chain is Putative multidrug resistance protein MdtD from Escherichia coli O81 (strain ED1a).